The sequence spans 247 residues: 2,3-bisphosphoglycerate-dependent phosphoglycerate mutase (247 aa).

Substrate contacts are provided by residues 8–15 (RHGESQWN), 21–22 (TG), R60, 87–90 (ERHY), K98, 114–115 (RR), and 183–184 (GN). H9 (tele-phosphohistidine intermediate) is an active-site residue. Residue E87 is the Proton donor/acceptor of the active site.

This sequence belongs to the phosphoglycerate mutase family. BPG-dependent PGAM subfamily.

It catalyses the reaction (2R)-2-phosphoglycerate = (2R)-3-phosphoglycerate. It functions in the pathway carbohydrate degradation; glycolysis; pyruvate from D-glyceraldehyde 3-phosphate: step 3/5. Catalyzes the interconversion of 2-phosphoglycerate and 3-phosphoglycerate. This is 2,3-bisphosphoglycerate-dependent phosphoglycerate mutase from Chlorobaculum parvum (strain DSM 263 / NCIMB 8327) (Chlorobium vibrioforme subsp. thiosulfatophilum).